Here is a 249-residue protein sequence, read N- to C-terminus: Ubiquinone/menaquinone biosynthesis C-methyltransferase UbiE (249 aa).

S-adenosyl-L-methionine contacts are provided by residues T72, D93, and 121-122 (DA).

It belongs to the class I-like SAM-binding methyltransferase superfamily. MenG/UbiE family.

The catalysed reaction is a 2-demethylmenaquinol + S-adenosyl-L-methionine = a menaquinol + S-adenosyl-L-homocysteine + H(+). It carries out the reaction a 2-methoxy-6-(all-trans-polyprenyl)benzene-1,4-diol + S-adenosyl-L-methionine = a 5-methoxy-2-methyl-3-(all-trans-polyprenyl)benzene-1,4-diol + S-adenosyl-L-homocysteine + H(+). Its pathway is quinol/quinone metabolism; menaquinone biosynthesis; menaquinol from 1,4-dihydroxy-2-naphthoate: step 2/2. It functions in the pathway cofactor biosynthesis; ubiquinone biosynthesis. Methyltransferase required for the conversion of demethylmenaquinol (DMKH2) to menaquinol (MKH2) and the conversion of 2-polyprenyl-6-methoxy-1,4-benzoquinol (DDMQH2) to 2-polyprenyl-3-methyl-6-methoxy-1,4-benzoquinol (DMQH2). The polypeptide is Ubiquinone/menaquinone biosynthesis C-methyltransferase UbiE (Cellvibrio japonicus (strain Ueda107) (Pseudomonas fluorescens subsp. cellulosa)).